Here is a 197-residue protein sequence, read N- to C-terminus: Holliday junction branch migration complex subunit RuvA (197 aa).

The interval Met1–Leu64 is domain I. Positions Arg65–Thr143 are domain II. The flexible linker stretch occupies residues Gly144–Leu153. Residues Leu153 to Arg197 are domain III.

It belongs to the RuvA family. In terms of assembly, homotetramer. Forms an RuvA(8)-RuvB(12)-Holliday junction (HJ) complex. HJ DNA is sandwiched between 2 RuvA tetramers; dsDNA enters through RuvA and exits via RuvB. An RuvB hexamer assembles on each DNA strand where it exits the tetramer. Each RuvB hexamer is contacted by two RuvA subunits (via domain III) on 2 adjacent RuvB subunits; this complex drives branch migration. In the full resolvosome a probable DNA-RuvA(4)-RuvB(12)-RuvC(2) complex forms which resolves the HJ.

The protein localises to the cytoplasm. Its function is as follows. The RuvA-RuvB-RuvC complex processes Holliday junction (HJ) DNA during genetic recombination and DNA repair, while the RuvA-RuvB complex plays an important role in the rescue of blocked DNA replication forks via replication fork reversal (RFR). RuvA specifically binds to HJ cruciform DNA, conferring on it an open structure. The RuvB hexamer acts as an ATP-dependent pump, pulling dsDNA into and through the RuvAB complex. HJ branch migration allows RuvC to scan DNA until it finds its consensus sequence, where it cleaves and resolves the cruciform DNA. The sequence is that of Holliday junction branch migration complex subunit RuvA from Stenotrophomonas maltophilia (strain R551-3).